The chain runs to 486 residues: Cobyric acid synthase (486 aa).

A GATase cobBQ-type domain is found at 248-435; it reads VLNVVVPVLP…LHGLFESPAA (188 aa). Cysteine 329 (nucleophile) is an active-site residue. Histidine 427 is an active-site residue.

The protein belongs to the CobB/CobQ family. CobQ subfamily.

It participates in cofactor biosynthesis; adenosylcobalamin biosynthesis. Functionally, catalyzes amidations at positions B, D, E, and G on adenosylcobyrinic A,C-diamide. NH(2) groups are provided by glutamine, and one molecule of ATP is hydrogenolyzed for each amidation. The chain is Cobyric acid synthase from Pseudomonas syringae pv. syringae (strain B728a).